A 367-amino-acid polypeptide reads, in one-letter code: Flagellar P-ring protein (367 aa).

Residues 1-22 (MRRMLVIRWILAIHLIATQVFA) form the signal peptide.

This sequence belongs to the FlgI family. As to quaternary structure, the basal body constitutes a major portion of the flagellar organelle and consists of four rings (L,P,S, and M) mounted on a central rod.

It is found in the periplasm. The protein localises to the bacterial flagellum basal body. Functionally, assembles around the rod to form the L-ring and probably protects the motor/basal body from shearing forces during rotation. The protein is Flagellar P-ring protein of Legionella pneumophila (strain Lens).